A 179-amino-acid chain; its full sequence is Segregation and condensation protein B (179 aa).

The protein belongs to the ScpB family. As to quaternary structure, homodimer. Homodimerization may be required to stabilize the binding of ScpA to the Smc head domains. Component of a cohesin-like complex composed of ScpA, ScpB and the Smc homodimer, in which ScpA and ScpB bind to the head domain of Smc. The presence of the three proteins is required for the association of the complex with DNA.

The protein localises to the cytoplasm. Participates in chromosomal partition during cell division. May act via the formation of a condensin-like complex containing Smc and ScpA that pull DNA away from mid-cell into both cell halves. This Clostridioides difficile (strain 630) (Peptoclostridium difficile) protein is Segregation and condensation protein B.